An 80-amino-acid chain; its full sequence is MSNKEITCIKPFKIIALILLIVLIINLSYKLFLRRYLKSTVIWCLGIANTDRNDMMWWQVSPLLERWVWQLVDNYESGYE.

The helical transmembrane segment at 12-32 (FKIIALILLIVLIINLSYKLF) threads the bilayer.

It localises to the membrane. This is an uncharacterized protein from Saccharomyces cerevisiae (strain ATCC 204508 / S288c) (Baker's yeast).